The sequence spans 198 residues: Translation initiation factor IF-3 (198 aa).

The tract at residues 168-198 is disordered; that stretch reads SLAPKKAGSPKKAETDTAKKENPKKAVETKE. Residues 178–198 show a composition bias toward basic and acidic residues; sequence KKAETDTAKKENPKKAVETKE.

It belongs to the IF-3 family. As to quaternary structure, monomer.

It is found in the cytoplasm. Functionally, IF-3 binds to the 30S ribosomal subunit and shifts the equilibrium between 70S ribosomes and their 50S and 30S subunits in favor of the free subunits, thus enhancing the availability of 30S subunits on which protein synthesis initiation begins. In Phocaeicola vulgatus (strain ATCC 8482 / DSM 1447 / JCM 5826 / CCUG 4940 / NBRC 14291 / NCTC 11154) (Bacteroides vulgatus), this protein is Translation initiation factor IF-3.